A 169-amino-acid polypeptide reads, in one-letter code: Small ribosomal subunit protein uS5c (169 aa).

Positions 17 to 80 (WQERVIQVRR…TDGRKNLINI (64 aa)) constitute an S5 DRBM domain.

The protein belongs to the universal ribosomal protein uS5 family. Part of the 30S ribosomal subunit. Contacts protein S4.

It localises to the plastid. Its subcellular location is the chloroplast. Its function is as follows. With S4 and S12 plays an important role in translational accuracy. In Guillardia theta (Cryptophyte), this protein is Small ribosomal subunit protein uS5c (rps5).